The following is a 66-amino-acid chain: Large ribosomal subunit protein uL29 (66 aa).

It belongs to the universal ribosomal protein uL29 family.

The polypeptide is Large ribosomal subunit protein uL29 (Brucella abortus (strain S19)).